The following is an 812-amino-acid chain: Probable inorganic carbon transporter subunit DabA (812 aa).

Cysteine 337, aspartate 339, histidine 499, and cysteine 514 together coordinate Zn(2+).

This sequence belongs to the inorganic carbon transporter (TC 9.A.2) DabA family. Forms a complex with DabB. It depends on Zn(2+) as a cofactor.

Its subcellular location is the cell inner membrane. Its function is as follows. Part of an energy-coupled inorganic carbon pump. This chain is Probable inorganic carbon transporter subunit DabA, found in Xanthomonas euvesicatoria pv. vesicatoria (strain 85-10) (Xanthomonas campestris pv. vesicatoria).